The primary structure comprises 65 residues: Large ribosomal subunit protein bL35 (65 aa).

This sequence belongs to the bacterial ribosomal protein bL35 family.

The polypeptide is Large ribosomal subunit protein bL35 (Thiobacillus denitrificans (strain ATCC 25259 / T1)).